The following is an 82-amino-acid chain: Beta-defensin 119 (82 aa).

A signal peptide spans 1-19 (MKFFLFFVILLAMEPVISG). Intrachain disulfides connect Cys26/Cys53, Cys33/Cys47, and Cys37/Cys54.

It belongs to the beta-defensin family.

It is found in the secreted. Functionally, has antibacterial activity. The sequence is that of Beta-defensin 119 (DEFB119) from Canis lupus familiaris (Dog).